A 460-amino-acid polypeptide reads, in one-letter code: NADH-ubiquinone oxidoreductase chain 4 (460 aa).

13 helical membrane-spanning segments follow: residues 22–42, 61–81, 97–114, 118–140, 149–169, 196–216, 226–246, 259–279, 286–305, 309–331, 352–372, 395–415, and 437–457; these read WLWP…LSWL, PLST…ILAS, YISL…AFSA, IMFY…RWGN, TYFL…LLLL, IWWT…GVHL, PIAG…YGMM, LSYP…SICM, SLIA…GILI, WGFT…LFCL, MALP…LALP, IALT…MFLM, and LLIA…ELIW.

Belongs to the complex I subunit 4 family.

The protein resides in the mitochondrion membrane. The catalysed reaction is a ubiquinone + NADH + 5 H(+)(in) = a ubiquinol + NAD(+) + 4 H(+)(out). In terms of biological role, core subunit of the mitochondrial membrane respiratory chain NADH dehydrogenase (Complex I) that is believed to belong to the minimal assembly required for catalysis. Complex I functions in the transfer of electrons from NADH to the respiratory chain. The immediate electron acceptor for the enzyme is believed to be ubiquinone. This chain is NADH-ubiquinone oxidoreductase chain 4 (MT-ND4), found in Tetraodon nigroviridis (Spotted green pufferfish).